Reading from the N-terminus, the 455-residue chain is Phosphoglucosamine mutase (455 aa).

Catalysis depends on serine 104, which acts as the Phosphoserine intermediate. Positions 104, 253, 255, and 257 each coordinate Mg(2+). Serine 104 bears the Phosphoserine mark.

This sequence belongs to the phosphohexose mutase family. Mg(2+) serves as cofactor. In terms of processing, activated by phosphorylation.

It carries out the reaction alpha-D-glucosamine 1-phosphate = D-glucosamine 6-phosphate. Catalyzes the conversion of glucosamine-6-phosphate to glucosamine-1-phosphate. This is Phosphoglucosamine mutase from Psychrobacter cryohalolentis (strain ATCC BAA-1226 / DSM 17306 / VKM B-2378 / K5).